Reading from the N-terminus, the 101-residue chain is Small ribosomal subunit protein bS6 (101 aa).

This sequence belongs to the bacterial ribosomal protein bS6 family.

Binds together with bS18 to 16S ribosomal RNA. In Micrococcus luteus (strain ATCC 4698 / DSM 20030 / JCM 1464 / CCM 169 / CCUG 5858 / IAM 1056 / NBRC 3333 / NCIMB 9278 / NCTC 2665 / VKM Ac-2230) (Micrococcus lysodeikticus), this protein is Small ribosomal subunit protein bS6.